The chain runs to 282 residues: Bis(5'-nucleosyl)-tetraphosphatase, symmetrical (282 aa).

Belongs to the Ap4A hydrolase family.

It carries out the reaction P(1),P(4)-bis(5'-adenosyl) tetraphosphate + H2O = 2 ADP + 2 H(+). Its function is as follows. Hydrolyzes diadenosine 5',5'''-P1,P4-tetraphosphate to yield ADP. The chain is Bis(5'-nucleosyl)-tetraphosphatase, symmetrical from Burkholderia thailandensis (strain ATCC 700388 / DSM 13276 / CCUG 48851 / CIP 106301 / E264).